A 398-amino-acid polypeptide reads, in one-letter code: Thyrotropin-releasing hormone receptor (398 aa).

Topologically, residues 1-28 (MENETGSELNQTQLQPRAVVALEYQVVT) are extracellular. N-linked (GlcNAc...) asparagine glycosylation is found at Asn-3 and Asn-10. The chain crosses the membrane as a helical span at residues 29–51 (ILLVLIICGLGIVGNIMVVLVVM). Residues 52–61 (RTKHMRTPTN) lie on the Cytoplasmic side of the membrane. Residues 62 to 83 (CYLVSLAVADLMVLVAAGLPNI) traverse the membrane as a helical segment. Residues 84–99 (TDSIYGSWVYGYVGCL) are Extracellular-facing. An intrachain disulfide couples Cys-98 to Cys-179. Residues 100–121 (CITYLQYLGINASSCSITAFTI) form a helical membrane-spanning segment. Residues 122–144 (ERYIAICHPIKAQFLCTFSRAKK) are Cytoplasmic-facing. A helical membrane pass occupies residues 145–168 (IIIFVWAFTSIYCMLWFFLLDLNI). Residues 169–193 (STYKDAIVVSCGYKISRNYYSPIYL) are Extracellular-facing. Residues 194–215 (MDFGVFYVVPMILATVLYGFIA) traverse the membrane as a helical segment. The Cytoplasmic portion of the chain corresponds to 216 to 266 (RILFLSPIPSDPKENSNTWKNDSTHQNKNLNSKTSNRYFNSTVSSRKQVTK). The helical transmembrane segment at 267–288 (MLAVVVILFALLWMPYRTLVVV) threads the bilayer. Residues 289–296 (NSFLSSPF) are Extracellular-facing. A helical membrane pass occupies residues 297–319 (QENWFLLFCRICIYLNSAINPVI). Topologically, residues 320–398 (YNLMSQKFRA…LASEVTFSQS (79 aa)) are cytoplasmic.

Belongs to the G-protein coupled receptor 1 family.

Its subcellular location is the cell membrane. Receptor for thyrotropin-releasing hormone (TRH). Upon ligand binding, this G-protein-coupled receptor triggers activation of the phosphatidylinositol (IP3)-calcium-protein kinase C (PKC) pathway. This Ovis aries (Sheep) protein is Thyrotropin-releasing hormone receptor (TRHR).